A 431-amino-acid polypeptide reads, in one-letter code: Glucose-1-phosphate adenylyltransferase (431 aa).

Lysine 39 serves as a coordination point for beta-D-fructose 1,6-bisphosphate. AMP contacts are provided by arginine 40, histidine 46, and arginine 52. Tyrosine 114 lines the alpha-D-glucose 1-phosphate pocket. Arginine 130 lines the AMP pocket. Alpha-D-glucose 1-phosphate-binding positions include glycine 179, 194-195 (EK), and serine 212. Arginine 386 contacts AMP. Position 429–431 (429–431 (QER)) interacts with beta-D-fructose 1,6-bisphosphate.

The protein belongs to the bacterial/plant glucose-1-phosphate adenylyltransferase family. As to quaternary structure, homotetramer.

The catalysed reaction is alpha-D-glucose 1-phosphate + ATP + H(+) = ADP-alpha-D-glucose + diphosphate. It participates in glycan biosynthesis; glycogen biosynthesis. Allosterically activated by fructose-1,6-bisphosphate (F16BP) and inhibited by AMP. Functionally, involved in the biosynthesis of ADP-glucose, a building block required for the elongation reactions to produce glycogen. Catalyzes the reaction between ATP and alpha-D-glucose 1-phosphate (G1P) to produce pyrophosphate and ADP-Glc. The chain is Glucose-1-phosphate adenylyltransferase from Klebsiella pneumoniae (strain 342).